Consider the following 384-residue polypeptide: Opsin-3 (384 aa).

Topologically, residues 1 to 62 (MATNFTQELY…VSKYWHYVLA (62 aa)) are extracellular. The N-linked (GlcNAc...) asparagine glycan is linked to N4. The helical transmembrane segment at 63-83 (LIYTMLMVTSLTGNGIVIWIF) threads the bilayer. Residues 84–94 (STSKSLRSASN) are Cytoplasmic-facing. A helical membrane pass occupies residues 95–115 (MFVINLAVFDLMMMLEMPLLI). The Extracellular portion of the chain corresponds to 116-132 (MNSFYQRLVGYQLGCDV). The cysteines at positions 130 and 207 are disulfide-linked. The chain crosses the membrane as a helical span at residues 133-153 (YAVLGSLSGIGGAITNAVIAF). At 154–171 (DRYKTISSPLDGRINTVQ) the chain is on the cytoplasmic side. The chain crosses the membrane as a helical span at residues 172-192 (AGLLIAFTWFWALPFTILPAF). Residues 193-219 (RIWGRFVPEGFLTTCSFDYFTEDQDTE) are Extracellular-facing. A helical transmembrane segment spans residues 220–240 (VFVACIFVWSYCIPMALICYF). Topologically, residues 241-284 (YSQLFGAVRLHERMLQEQAKKMNVKSLASNKEDNSRSVEIRIAK) are cytoplasmic. A helical transmembrane segment spans residues 285–305 (VAFTIFFLFICAWTPYAFVTM). At 306-312 (TGAFGDR) the chain is on the extracellular side. Residues 313–333 (TLLTPIATMIPAVCCKVVSCI) form a helical membrane-spanning segment. Topologically, residues 334 to 384 (DPWVYAINHPRYRAELQKRLPWMGVREQDPDAVSTTTSVATAGFQPPAAEA) are cytoplasmic.

The protein belongs to the G-protein coupled receptor 1 family. Opsin subfamily. In terms of tissue distribution, in the retina, expression is essentially uniformly distributed but a higher level is seen in the ventral region where the B-cells are localized.

It is found in the membrane. In terms of biological role, visual pigments are the light-absorbing molecules that mediate vision. They consist of an apoprotein, opsin, covalently linked to cis-retinal. May play a role in photoperiodic photoreception. The protein is Opsin-3 (OP3) of Manduca sexta (Tobacco hawkmoth).